The following is a 67-amino-acid chain: uncharacterized protein (67 aa).

This is an uncharacterized protein from Enterobacteria phage T4 (Bacteriophage T4).